The following is a 505-amino-acid chain: ATP synthase subunit alpha (505 aa).

Position 169–176 (169–176 (GDRKTGKT)) interacts with ATP.

The protein belongs to the ATPase alpha/beta chains family. As to quaternary structure, F-type ATPases have 2 components, CF(1) - the catalytic core - and CF(0) - the membrane proton channel. CF(1) has five subunits: alpha(3), beta(3), gamma(1), delta(1), epsilon(1). CF(0) has three main subunits: a(1), b(2) and c(9-12). The alpha and beta chains form an alternating ring which encloses part of the gamma chain. CF(1) is attached to CF(0) by a central stalk formed by the gamma and epsilon chains, while a peripheral stalk is formed by the delta and b chains.

Its subcellular location is the cell membrane. The catalysed reaction is ATP + H2O + 4 H(+)(in) = ADP + phosphate + 5 H(+)(out). Produces ATP from ADP in the presence of a proton gradient across the membrane. The alpha chain is a regulatory subunit. This chain is ATP synthase subunit alpha, found in Pediococcus pentosaceus (strain ATCC 25745 / CCUG 21536 / LMG 10740 / 183-1w).